We begin with the raw amino-acid sequence, 486 residues long: Protein nucleotidyltransferase YdiU (486 aa).

Residues Gly-90, Gly-92, Arg-93, Lys-113, Asp-125, Gly-126, Arg-176, and Arg-183 each contribute to the ATP site. The Proton acceptor role is filled by Asp-252. Residues Asn-253 and Asp-262 each coordinate Mg(2+). Asp-262 contributes to the ATP binding site.

It belongs to the SELO family. The cofactor is Mg(2+). Mn(2+) is required as a cofactor.

The catalysed reaction is L-seryl-[protein] + ATP = 3-O-(5'-adenylyl)-L-seryl-[protein] + diphosphate. It carries out the reaction L-threonyl-[protein] + ATP = 3-O-(5'-adenylyl)-L-threonyl-[protein] + diphosphate. The enzyme catalyses L-tyrosyl-[protein] + ATP = O-(5'-adenylyl)-L-tyrosyl-[protein] + diphosphate. It catalyses the reaction L-histidyl-[protein] + UTP = N(tele)-(5'-uridylyl)-L-histidyl-[protein] + diphosphate. The catalysed reaction is L-seryl-[protein] + UTP = O-(5'-uridylyl)-L-seryl-[protein] + diphosphate. It carries out the reaction L-tyrosyl-[protein] + UTP = O-(5'-uridylyl)-L-tyrosyl-[protein] + diphosphate. Functionally, nucleotidyltransferase involved in the post-translational modification of proteins. It can catalyze the addition of adenosine monophosphate (AMP) or uridine monophosphate (UMP) to a protein, resulting in modifications known as AMPylation and UMPylation. The protein is Protein nucleotidyltransferase YdiU of Pseudomonas aeruginosa (strain ATCC 15692 / DSM 22644 / CIP 104116 / JCM 14847 / LMG 12228 / 1C / PRS 101 / PAO1).